The primary structure comprises 199 residues: dITP/XTP pyrophosphatase (199 aa).

8 to 13 contributes to the substrate binding site; that stretch reads TSNINK. The active-site Proton acceptor is the D68. Mg(2+) is bound at residue D68. Residues S69, 155–158, K177, and 182–183 contribute to the substrate site; these read FGYN and HR.

It belongs to the HAM1 NTPase family. Homodimer. Mg(2+) serves as cofactor.

The catalysed reaction is XTP + H2O = XMP + diphosphate + H(+). It carries out the reaction dITP + H2O = dIMP + diphosphate + H(+). It catalyses the reaction ITP + H2O = IMP + diphosphate + H(+). Functionally, pyrophosphatase that catalyzes the hydrolysis of nucleoside triphosphates to their monophosphate derivatives, with a high preference for the non-canonical purine nucleotides XTP (xanthosine triphosphate), dITP (deoxyinosine triphosphate) and ITP. Seems to function as a house-cleaning enzyme that removes non-canonical purine nucleotides from the nucleotide pool, thus preventing their incorporation into DNA/RNA and avoiding chromosomal lesions. The chain is dITP/XTP pyrophosphatase from Borrelia recurrentis (strain A1).